The primary structure comprises 353 residues: UPF0283 membrane protein YcjF (353 aa).

3 consecutive transmembrane segments (helical) span residues 70–90 (MVMGGLALFGASVVGQGVQWT), 100–120 (VALGGCAAGALIIGAGVGSVV), and 213–233 (ESTLMIAVSPLALVDMAFIAW).

This sequence belongs to the UPF0283 family.

It localises to the cell inner membrane. This Escherichia fergusonii (strain ATCC 35469 / DSM 13698 / CCUG 18766 / IAM 14443 / JCM 21226 / LMG 7866 / NBRC 102419 / NCTC 12128 / CDC 0568-73) protein is UPF0283 membrane protein YcjF.